Consider the following 241-residue polypeptide: 2-C-methyl-D-erythritol 4-phosphate cytidylyltransferase (241 aa).

This sequence belongs to the IspD/TarI cytidylyltransferase family. IspD subfamily. Homodimer.

The enzyme catalyses 2-C-methyl-D-erythritol 4-phosphate + CTP + H(+) = 4-CDP-2-C-methyl-D-erythritol + diphosphate. The protein operates within isoprenoid biosynthesis; isopentenyl diphosphate biosynthesis via DXP pathway; isopentenyl diphosphate from 1-deoxy-D-xylulose 5-phosphate: step 2/6. Catalyzes the formation of 4-diphosphocytidyl-2-C-methyl-D-erythritol from CTP and 2-C-methyl-D-erythritol 4-phosphate (MEP). This Yersinia pestis protein is 2-C-methyl-D-erythritol 4-phosphate cytidylyltransferase.